The chain runs to 865 residues: MERAGPNSVRSQQQRDPDWVEAWLDDHRDFTFSYFIRKATRDMVNAWFSERVHNIPVCKEGIRAHTESCSCSLQQSPHADNTTPGAPARKISASEFDRPLRPIVVKDSEGTVSFLSDSGKKEQMPLTPPRFDSDEGDQCSRLLELVKDISSHLDVTALCHKIFLHIHGLISADRYSLFLVCEDSSKDKFLISRLFDVAEGSTLEEASNNCIRLEWNKGIVGHVAAFGEPLNIKDAYEDPRFNAEVDQITGYKTQSILCMPIKNHREEVVGVAQAINKKSGNGGTFTEKDEKDFAAYLAFCGIVLHNAQLYETSLLENKRNQVLLDLASLIFEEQQSLEVILKKIAATIISFMQVQKCTIFIVDEDCPDSFSRVFHMECEEVGKPSDPLTREQDANKINYMYAQYVKNTMEPLNIPDVTKDKRFPWTNENMGHVNTPCIGSLLCTPIKNGKKNKVIGVCQLVNKMEENTGKIKAFNQNDEQFLEAFVIFCGLGIQNTQMYEAVERAMAKQMVTLEVLSYHASAAEEETRELQALSAAVVPSAQTLKITDFSFSDFELSDLETALCTIRMFTDLNLVQNFQMKHEVLCRWILSVKKNYRKNVAYHNWRHAFNTAQCMFAALKAGKIQNKLTDLETLALLIAALSHDLDHRGVNNSYIQRSEHPLAQLYCHSIMEHHHFDQCLMILNSPGNQILSGLSIDEYKTTLKIIKQAILATDLALYIKRRGEFFELIRKNQFSFEDPLQKELFLAMLMTACDLSAITKPWPIQQRIAELVAAEFFDQGDRERKELNMEPADLMNREKKNKIPSMQVGFIDAICLQLYEALTHVSEDCLPLLDGCRKNRQKWQALAEQQEKMLLNGESSQGKRD.

Position 92 is a phosphoserine (Ser-92). 2 GAF domains span residues 154 to 304 (DVTA…GIVL) and 336 to 493 (SLEV…GLGI). The region spanning 526–850 (ETRELQALSA…QKWQALAEQQ (325 aa)) is the PDEase domain. Residue His-603 is the Proton donor of the active site. 4 residues coordinate Zn(2+): His-607, His-643, Asp-644, and Asp-754. Asp-644 contributes to the Mg(2+) binding site. Position 807 (Gln-807) interacts with 3',5'-cyclic GMP.

Belongs to the cyclic nucleotide phosphodiesterase family. Zn(2+) serves as cofactor. It depends on Mg(2+) as a cofactor. In terms of processing, phosphorylation is regulated by binding of cGMP to the two allosteric sites. Phosphorylation by PRKG1 leads to its activation.

The catalysed reaction is 3',5'-cyclic GMP + H2O = GMP + H(+). It participates in purine metabolism; 3',5'-cyclic GMP degradation; GMP from 3',5'-cyclic GMP: step 1/1. Functionally, plays a role in signal transduction by regulating the intracellular concentration of cyclic nucleotides. This phosphodiesterase catalyzes the specific hydrolysis of cGMP to 5'-GMP. Specifically regulates nitric-oxide-generated cGMP. This Mus musculus (Mouse) protein is cGMP-specific 3',5'-cyclic phosphodiesterase (Pde5a).